Consider the following 52-residue polypeptide: UPF0391 membrane protein ACIAD3602 (52 aa).

2 helical membrane-spanning segments follow: residues 6–26 (IIFAVIALIASLLGFGGVAGL) and 30–50 (FAVILLVVAVILAIVGFISRG).

It belongs to the UPF0391 family.

The protein resides in the cell membrane. The chain is UPF0391 membrane protein ACIAD3602 from Acinetobacter baylyi (strain ATCC 33305 / BD413 / ADP1).